Consider the following 129-residue polypeptide: uncharacterized protein (129 aa).

Belongs to the asfivirus C129R family.

The protein localises to the virion. Functionally, plays a role in the inhibition of type I interferon signaling pathway. Mechanistically, specifically interacts with 2',3'-cGAMP and cleaves it via its phosphodiesterase activity. In turn, prevents 2',3'-cGAMP interaction with host ER-resident STING1 leading to inhibition of downstream signaling pathway and type I interferon production. This is an uncharacterized protein from Ornithodoros (relapsing fever ticks).